The primary structure comprises 444 residues: Glycerol-3-phosphate transporter (444 aa).

Over 1–36 (MLNIFKPAPHIERLDDSKMDAAYKRLRLQVFIGIFI) the chain is Cytoplasmic. The helical transmembrane segment at 37-57 (GYAGYYLLRKNFAFAIPYLQE) threads the bilayer. Over 58 to 63 (QGFSKT) the chain is Extracellular. The chain crosses the membrane as a helical span at residues 64–84 (ELGLVLAAVSIAYGFSKFIMG). At 85-93 (MVSDRCNPR) the chain is on the cytoplasmic side. The helical transmembrane segment at 94-112 (YFLATGLFLSAIVNILFVS) threads the bilayer. At 113–120 (MPWVTSSV) the chain is on the extracellular side. A helical transmembrane segment spans residues 121-141 (TIMFIFMFINGWFQGMGWPPC). Topologically, residues 142–160 (GRTMAHWFSISERGTKMSI) are cytoplasmic. The helical transmembrane segment at 161 to 180 (WNVAHNIGGGILAPLVTLGI) threads the bilayer. Residues 181 to 189 (AMFVTWKSV) lie on the Extracellular side of the membrane. The chain crosses the membrane as a helical span at residues 190 to 207 (FFFPAIIAIIISFLIVLL). Residues 208 to 261 (VRDTPQSCGLPPIEEYRNDYPKHAFKNQEKELTTKEILFQYVLNNKFLWYIAFA) lie on the Cytoplasmic side of the membrane. A helical membrane pass occupies residues 262–282 (NVFVYFVRYGVVDWAPTYLTE). Over 283 to 287 (AKGFS) the chain is Extracellular. The chain crosses the membrane as a helical span at residues 288–308 (PEDSRWSYFLYEYAGIPGTIL). Residues 309–321 (CGWISDRFFKSRR) lie on the Cytoplasmic side of the membrane. Residues 322–341 (APAGVLFMAGVFIAVLVYWL) traverse the membrane as a helical segment. Residues 342–346 (NPAGN) lie on the Extracellular side of the membrane. Residues 347–368 (PLVDNIALISIGFLIYGPVMLI) form a helical membrane-spanning segment. Residues 369 to 387 (GLQAIDLAPKKAAGTAAGL) lie on the Cytoplasmic side of the membrane. The chain crosses the membrane as a helical span at residues 388–409 (TGFFGYIGGSAFANAIMGFVVD). The Extracellular segment spans residues 410 to 414 (RFNWN). Residues 415-435 (GGFIMLISSCILAIVFLALTW) traverse the membrane as a helical segment. Over 436–444 (NTGKRAEHV) the chain is Cytoplasmic.

Belongs to the major facilitator superfamily. Organophosphate:Pi antiporter (OPA) (TC 2.A.1.4) family.

The protein resides in the cell membrane. Functionally, responsible for glycerol-3-phosphate uptake. The protein is Glycerol-3-phosphate transporter (glpT) of Bacillus subtilis (strain 168).